The primary structure comprises 602 residues: Elongation factor 4 (602 aa).

Positions 7–189 (DKIRNFSIVA…AIVTRLPPPK (183 aa)) constitute a tr-type G domain. GTP-binding positions include 19–24 (DHGKST) and 136–139 (NKVD).

Belongs to the TRAFAC class translation factor GTPase superfamily. Classic translation factor GTPase family. LepA subfamily.

Its subcellular location is the cell inner membrane. It carries out the reaction GTP + H2O = GDP + phosphate + H(+). In terms of biological role, required for accurate and efficient protein synthesis under certain stress conditions. May act as a fidelity factor of the translation reaction, by catalyzing a one-codon backward translocation of tRNAs on improperly translocated ribosomes. Back-translocation proceeds from a post-translocation (POST) complex to a pre-translocation (PRE) complex, thus giving elongation factor G a second chance to translocate the tRNAs correctly. Binds to ribosomes in a GTP-dependent manner. The chain is Elongation factor 4 from Caulobacter vibrioides (strain NA1000 / CB15N) (Caulobacter crescentus).